A 102-amino-acid chain; its full sequence is Small ribosomal subunit protein uS10 (102 aa).

This sequence belongs to the universal ribosomal protein uS10 family. Part of the 30S ribosomal subunit.

Involved in the binding of tRNA to the ribosomes. The polypeptide is Small ribosomal subunit protein uS10 (Salinispora tropica (strain ATCC BAA-916 / DSM 44818 / JCM 13857 / NBRC 105044 / CNB-440)).